A 608-amino-acid polypeptide reads, in one-letter code: MDYKALGLKTGLEIHIQLNTRRKLFCHCPPVLRDDEPHFRVERRLHISVSELGAVDPAVVWEVRKRRKYIYEGYRDTTCLVELDEEPPHMPDEEALTTAVAVAKMFNAKLFDEIYVMRKTVVDGSNVSGFQRTMLVAYGGRAKILGYDIGVETIALEEDAARKMGEEGKAVVYRLDRLGIPLIEIATEPMTYAPQQVEEVAWIIGYSVKITGRAKRGVGTVRQDVNVSIAGGAKTEIKGVPDLSLIPKVIEYEATRQLSLLKIAEELKRRGVEKVELSLADVTQAFANTKSKLVRRVLDAGGKVVAVKAPGFNKLLGAEVQPGRRFGTELADYVRAWTELGGLLHSDELPGYGITADEVRDVEARVGVNSFILLMGVDEGELEEAARVVVERLNAAPRGVPEETRAANPDGTTRFLRPRPGAARMYPETDLPPVRITFEILKKAEEVAKVTLEGKLKELTSRGLSRDLALQLVKSPHLEKFEDYLQRFKEVPPQQIAAVLLNISKALAREGVEITDEKVESVLDALNRKVITKEAVEEVLRNMKPGESAEEAAKRLGLLRMSYDEVKKIVAEVAAQVGKEKAVGEVMRRYRGKVDVEDVRRALAEIYL.

Residues Pro-401–Glu-428 form a disordered region.

This sequence belongs to the GatB/GatE family. GatE subfamily. As to quaternary structure, heterodimer of GatD and GatE.

The enzyme catalyses L-glutamyl-tRNA(Gln) + L-glutamine + ATP + H2O = L-glutaminyl-tRNA(Gln) + L-glutamate + ADP + phosphate + H(+). In terms of biological role, allows the formation of correctly charged Gln-tRNA(Gln) through the transamidation of misacylated Glu-tRNA(Gln) in organisms which lack glutaminyl-tRNA synthetase. The reaction takes place in the presence of glutamine and ATP through an activated gamma-phospho-Glu-tRNA(Gln). The GatDE system is specific for glutamate and does not act on aspartate. This chain is Glutamyl-tRNA(Gln) amidotransferase subunit E, found in Pyrobaculum arsenaticum (strain DSM 13514 / JCM 11321 / PZ6).